Consider the following 114-residue polypeptide: Probable gas vesicle protein J2 (114 aa).

The segment covering 1-10 (MTDLDHRYPG) has biased composition (basic and acidic residues). Positions 1-21 (MTDLDHRYPGEETEPYGPPSG) are disordered.

It belongs to the gas vesicle GvpA family. As to quaternary structure, interacts with GvpA.

It localises to the gas vesicle. Functionally, a minor component of the gas vesicle, might be involved in nucleating gas vesicle formation. Gas vesicles (GV) are hollow, gas filled proteinaceous nanostructures. It is not clear what function GVs perform in soil bacteria. In Streptomyces coelicolor (strain ATCC BAA-471 / A3(2) / M145), this protein is Probable gas vesicle protein J2.